Here is a 477-residue protein sequence, read N- to C-terminus: MSSRGYEAVIGIEIHVQLSTKTKIFSSESTAFEAGDNENTSPVSVGMPGTLPVLNSKVVEYSIKTGLALGCDIRRKSVFARKNYFYPDLPKGYQISQYDQPICENGSITFKVDGKEKTVSITRAHMEEDAGKSNHHGEYTLINYNRSGIPLLEVVSGPDMRTPQEAAEYARTIRQIVRYLDVCDGNLEEGSLRCDCNVSVRKEGAKQFGTKVEIKNINSFRFVEKAIEYEIERQIDCVERGDKIIQETRLWDPDKNRTFSMRAKEDAQDYRYFPDPDLQPVIVTDSMIEKYKKELPELPIARAQRFQDDHALPELDATVLTTEKDLADFYEDTAKESKNFKASSNWIMTELLRELNSANKNIKDSPIKPAQLGKMIAMIDKGTISGKIAKTIFQEMWASGNDPEVIMKEKGLVQISDPAAIEKLVDEVLAANAQTVEDHKSGKKKNLFGFFVGAVMKASKGQANPDLVNKILLEKLK.

The protein belongs to the GatB/GatE family. GatB subfamily. As to quaternary structure, heterotrimer of A, B and C subunits.

It catalyses the reaction L-glutamyl-tRNA(Gln) + L-glutamine + ATP + H2O = L-glutaminyl-tRNA(Gln) + L-glutamate + ADP + phosphate + H(+). It carries out the reaction L-aspartyl-tRNA(Asn) + L-glutamine + ATP + H2O = L-asparaginyl-tRNA(Asn) + L-glutamate + ADP + phosphate + 2 H(+). In terms of biological role, allows the formation of correctly charged Asn-tRNA(Asn) or Gln-tRNA(Gln) through the transamidation of misacylated Asp-tRNA(Asn) or Glu-tRNA(Gln) in organisms which lack either or both of asparaginyl-tRNA or glutaminyl-tRNA synthetases. The reaction takes place in the presence of glutamine and ATP through an activated phospho-Asp-tRNA(Asn) or phospho-Glu-tRNA(Gln). The protein is Aspartyl/glutamyl-tRNA(Asn/Gln) amidotransferase subunit B of Bdellovibrio bacteriovorus (strain ATCC 15356 / DSM 50701 / NCIMB 9529 / HD100).